A 216-amino-acid chain; its full sequence is GTP cyclohydrolase 1 (216 aa).

Positions 108, 111, and 179 each coordinate Zn(2+).

The protein belongs to the GTP cyclohydrolase I family. In terms of assembly, toroid-shaped homodecamer, composed of two pentamers of five dimers.

The catalysed reaction is GTP + H2O = 7,8-dihydroneopterin 3'-triphosphate + formate + H(+). It functions in the pathway cofactor biosynthesis; 7,8-dihydroneopterin triphosphate biosynthesis; 7,8-dihydroneopterin triphosphate from GTP: step 1/1. The chain is GTP cyclohydrolase 1 from Shewanella sp. (strain MR-7).